Reading from the N-terminus, the 151-residue chain is D-ribose pyranase 1 (151 aa).

Catalysis depends on histidine 20, which acts as the Proton donor. Residues aspartate 28, histidine 98, and tryptophan 121 to asparagine 123 each bind substrate.

This sequence belongs to the RbsD / FucU family. RbsD subfamily. As to quaternary structure, homodecamer.

It is found in the cytoplasm. The enzyme catalyses beta-D-ribopyranose = beta-D-ribofuranose. It functions in the pathway carbohydrate metabolism; D-ribose degradation; D-ribose 5-phosphate from beta-D-ribopyranose: step 1/2. Catalyzes the interconversion of beta-pyran and beta-furan forms of D-ribose. This is D-ribose pyranase 1 from Streptomyces griseus subsp. griseus (strain JCM 4626 / CBS 651.72 / NBRC 13350 / KCC S-0626 / ISP 5235).